A 505-amino-acid chain; its full sequence is MSDLIRRTAVELAAMIAAREVSAEEVTRAHLDRIAAVDPAVHAFLYVDADGALTAARAVDARLAAGERLGPLAGVPLALKDVFTTRGMPTTCGSKILEGWIPPYDATVVQKIRDAGIVILGKTNMDEFAMGSSTENSAFGPTRNPWDLSRIPGGSSGGSAAAVAAFEAPLAIGTDTGGSIRQPAAVTGIVGTKPTYGGVSRYGLVAFSSSLDQAGPFARTVLDAAYLHAAIAGHDPRDATSIDAPVPDVVAAARNGDVRGLRIGVVRELDGDGYDPGVRHQFHQAVKLLADLGADVGEVSCPHFEYALAAYYLIAPSECSSNLARFDAMRYGLRLGDDGTRTAEDVMALTRAAGFGAEVKRRIMLGTYALSSGYYEAYYGSAQKVRTLIIQDFAAAFEKFDVLISPTTPTTAFPLGERVDDPLKMYLADLDTIPVNLAGNAAMSVPIGCSPDDGLPVGLQIMAPVLADDRLYRVGAALEAAYRERTGRLLIEDVPDPAANQEGAA.

Residues K80 and S155 each act as charge relay system in the active site. S179 serves as the catalytic Acyl-ester intermediate.

The protein belongs to the amidase family. GatA subfamily. As to quaternary structure, heterotrimer of A, B and C subunits.

The enzyme catalyses L-glutamyl-tRNA(Gln) + L-glutamine + ATP + H2O = L-glutaminyl-tRNA(Gln) + L-glutamate + ADP + phosphate + H(+). Its function is as follows. Allows the formation of correctly charged Gln-tRNA(Gln) through the transamidation of misacylated Glu-tRNA(Gln) in organisms which lack glutaminyl-tRNA synthetase. The reaction takes place in the presence of glutamine and ATP through an activated gamma-phospho-Glu-tRNA(Gln). In Acidothermus cellulolyticus (strain ATCC 43068 / DSM 8971 / 11B), this protein is Glutamyl-tRNA(Gln) amidotransferase subunit A.